The primary structure comprises 373 residues: CXADR-like membrane protein (373 aa).

Positions 1-18 (MSLLLLLLLVSYYVGTLG) are cleaved as a signal peptide. 2 Ig-like C2-type domains span residues 19-127 (THTE…VILK) and 135-224 (PKCE…VRVT). Topologically, residues 19–235 (THTEIKRVAE…QYVQSIGMVA (217 aa)) are extracellular. Intrachain disulfides connect Cys-35–Cys-111 and Cys-153–Cys-208. Asn-74 and Asn-197 each carry an N-linked (GlcNAc...) asparagine glycan. The helical transmembrane segment at 236 to 256 (GAVTGIVAGALLIFLLVWLLI) threads the bilayer. Topologically, residues 257–373 (RRKDKERYEE…PSQSRAFQTV (117 aa)) are cytoplasmic. The segment covering 264–281 (YEEEERPNEIREDAEAPK) has biased composition (basic and acidic residues). The tract at residues 264–373 (YEEEERPNEI…PSQSRAFQTV (110 aa)) is disordered. Positions 288–314 (SSSSSGSRSSRSGSSSTRSTANSASRS) are enriched in low complexity. Residues 355–373 (KAETTPSMIPSQSRAFQTV) show a composition bias toward polar residues.

Predominantly expressed in epithelial cells within different tissues and in the white adipose tissue. Expressed at high levels in small intestine and placenta, at intermediate levels in the heart, skeletal muscle, colon, spleen, kidney and lung and at low levels in the liver and peripheral blood leukocytes. Highly abundant in the intestine during embryo and fetal development (at protein level).

It is found in the cell junction. The protein localises to the tight junction. The protein resides in the cell membrane. Functionally, may be involved in the cell-cell adhesion. May play a role in adipocyte differentiation and development of obesity. Is required for normal small intestine development. This Homo sapiens (Human) protein is CXADR-like membrane protein (CLMP).